Consider the following 249-residue polypeptide: uncharacterized protein (249 aa).

A signal peptide spans 1 to 25; that stretch reads MRYLNTKNIIAAGVLLSCMSSIAWG.

It belongs to the periplasmic pilus chaperone family.

The protein resides in the periplasm. Functionally, could be required for the biogenesis of a putative fimbria. This is an uncharacterized protein from Escherichia coli (strain K12).